The primary structure comprises 792 residues: Alpha-1,6-mannosylglycoprotein 6-beta-N-acetylglucosaminyltransferase B (792 aa).

Residues 1–24 (MITVNPDGKIMVRRCLVTLRPFRL) lie on the Cytoplasmic side of the membrane. The chain crosses the membrane as a helical; Signal-anchor for type II membrane protein span at residues 25–45 (FVLGIGFFTLCFLMTSLGGQF). At 46–792 (SARRLGDSPF…GQVALCQGCL (747 aa)) the chain is on the lumenal side. Asn-127 carries N-linked (GlcNAc...) asparagine glycosylation. 4 cysteine pairs are disulfide-bonded: Cys-157–Cys-195, Cys-168–Cys-208, Cys-184–Cys-353, and Cys-387–Cys-644. N-linked (GlcNAc...) asparagine glycosylation is present at Asn-675. Disulfide bonds link Cys-700/Cys-775, Cys-704/Cys-777, Cys-711/Cys-764, Cys-732/Cys-753, and Cys-788/Cys-791.

This sequence belongs to the glycosyltransferase 18 family. Requires Mn(2+) as cofactor. In terms of tissue distribution, present in brain (at protein level). Predominantly expressed in hippocampus, superficial layers of the brain cortex, striatum, nucleus accumbens, a subset of nuclei in the thalamus, inferior colliculus, brain stem and cerebellum.

The protein resides in the golgi apparatus membrane. The enzyme catalyses N(4)-{beta-D-GlcNAc-(1-&gt;2)-[beta-D-GlcNAc-(1-&gt;4)]-alpha-D-Man-(1-&gt;3)-[beta-D-GlcNAc-(1-&gt;2)-alpha-D-Man-(1-&gt;6)]-beta-D-Man-(1-&gt;4)-beta-D-GlcNAc-(1-&gt;4)-beta-D-GlcNAc}-L-asparaginyl-[protein] + UDP-N-acetyl-alpha-D-glucosamine = N(4)-{beta-D-GlcNAc-(1-&gt;2)-[beta-D-GlcNAc-(1-&gt;4)]-alpha-D-Man-(1-&gt;3)-[beta-D-GlcNAc-(1-&gt;2)-[beta-D-GlcNAc-(1-&gt;6)]-alpha-D-Man-(1-&gt;6)]-beta-D-Man-(1-&gt;4)-beta-D-GlcNAc-(1-&gt;4)-beta-D-GlcNAc}-L-asparaginyl-[protein] + UDP + H(+). The catalysed reaction is 3-O-[N-acetyl-beta-D-glucosaminyl-(1-&gt;2)-alpha-D-mannosyl]-L-seryl-[protein] + UDP-N-acetyl-alpha-D-glucosamine = O(3)-{N-acetyl-beta-D-glucosaminyl-(1-&gt;2)-[N-acetyl-beta-D-glucosaminyl-(1-&gt;6)]-alpha-D-mannosyl}-L-seryl-[protein] + UDP + H(+). It catalyses the reaction 3-O-[N-acetyl-beta-D-glucosaminyl-(1-&gt;2)-alpha-D-mannosyl]-L-threonyl-[protein] + UDP-N-acetyl-alpha-D-glucosamine = O(3)-{N-acetyl-beta-D-glucosaminyl-(1-&gt;2)-[N-acetyl-beta-D-glucosaminyl-(1-&gt;6)]-alpha-D-mannosyl}-L-threonyl-[protein] + UDP + H(+). The protein operates within protein modification; protein glycosylation. Glycosyltransferase that acts on alpha-linked mannose of N-glycans and O-mannosyl glycans. Catalyzes the transfer of N-acetylglucosamine (GlcNAc) to the beta 1-6 linkage of the mannose residue of GlcNAc-beta1,2-Man-alpha on both the alpha1,3- and alpha1,6-linked mannose arms in the core structure of N-glycan. Also acts on the GlcNAc-beta1,2-Man-alpha1-Ser/Thr moiety, forming a 2,6-branched structure in brain O-mannosyl glycan. Plays an active role in modulating integrin and laminin-dependent adhesion and migration of neuronal cells via its activity in the O-mannosyl glycan pathway. This Mus musculus (Mouse) protein is Alpha-1,6-mannosylglycoprotein 6-beta-N-acetylglucosaminyltransferase B (Mgat5b).